The chain runs to 322 residues: Elongation factor Ts, mitochondrial (322 aa).

It belongs to the EF-Ts family.

Its subcellular location is the mitochondrion. Its function is as follows. Associates with the EF-Tu.GDP complex and induces the exchange of GDP to GTP. It remains bound to the aminoacyl-tRNA.EF-Tu.GTP complex up to the GTP hydrolysis stage on the ribosome. This is Elongation factor Ts, mitochondrial from Chlamydomonas reinhardtii (Chlamydomonas smithii).